Here is a 579-residue protein sequence, read N- to C-terminus: Cytochrome P450 monooxygenase ORF6 (579 aa).

Asn2 carries N-linked (GlcNAc...) asparagine glycosylation. The helical transmembrane segment at 7 to 29 threads the bilayer; sequence PLGSFVGTTLLLFILYKLVKLAY. 2 N-linked (GlcNAc...) asparagine glycosylation sites follow: Asn194 and Asn390. Cys512 contributes to the heme binding site.

Belongs to the cytochrome P450 family. It depends on heme as a cofactor.

The protein resides in the membrane. Its pathway is sesquiterpene biosynthesis. Cytochrome P450 monooxygenase; part of the gene cluster that mediates the biosynthesis of PR-toxin, a bicyclic sesquiterpene belonging to the eremophilane class and acting as a mycotoxin. The first step of the pathway is catalyzed by the aristolochene synthase which performs the cyclization of trans,trans-farnesyl diphosphate (FPP) to the bicyclic sesquiterpene aristolochene. Following the formation of aristolochene, the non-oxygenated aristolochene is converted to the trioxygenated intermediate eremofortin B, via 7-epi-neopetasone. This conversion appears to involve three enzymes, a hydroxysterol oxidase-like enzyme, the quinone-oxidase prx3 that forms the quinone-type-structure in the bicyclic nucleus of aristolochene with the C8-oxo group and the C-3 hydroxyl group, and the P450 monooxygenase ORF6 that introduces the epoxide at the double bond between carbons 1 and 2. No monoxy or dioxy-intermediates have been reported to be released to the broth, so these three early oxidative reactions may be coupled together. Eremofortin B is further oxidized by another P450 monooxygenase, that introduces a second epoxide between carbons 7 and 11 prior to acetylation to eremofortin A by the acetyltransferase ORF8. The second epoxidation may be performed by a second P450 monooxygenase. After the acetylation step, eremofortin A is converted to eremofortin C and then to PR-toxin. First the conversion of eremofortin A to eremofortin C proceeds by oxidation of the side chain of the molecule at C-12 and is catalyzed by the short-chain oxidoreductase prx1. The cytochrome P450 monooxygenase ORF6 is probably also involved in this step. The primary alcohol formed at C-12 is finally oxidized by the short-chain alcohol dehydrogenase prx4 that forms PR-toxin. The protein is Cytochrome P450 monooxygenase ORF6 of Penicillium roqueforti (strain FM164).